The following is a 400-amino-acid chain: MGFWAKLKEKLTKKTNQVEQDEPILDQQDQQDQQEEQEQIIEKEIEQIKENKIKKTKTSETKKQEKPIETLKEKKKREKQKEKDKKVEKAMLKSAFNFSKDIKKLSKKYKQADDEFFEELEDVLIQTDMGMKMVLKVSNLVRKKTKRDTSFENIKDALVESLYQAYTDNDWTNKKYRIDFKENRLNIFMLVGVNGTGKTTSLAKMANYYAELGYKVLIAAADTFRAGATQQLEEWIKTRLNNKVDLVKANKLNADPASVVFDAIKKAKEQNYDLLLIDTAGRLQNKVNLMAELEKMNKIIQQVEKSAPHEVLLVIDATTGQNGVIQAEEFSKVADVSGIILTKMDSTSKGGIGLAIKELLNIPIKMIGVGEKVDDLLAFDIDQYIVHLSSGFMQGDEVEK.

Disordered stretches follow at residues 12-37 (TKKT…QEEQ) and 51-86 (NKIK…KDKK). Residues 51–72 (NKIKKTKTSETKKQEKPIETLK) show a composition bias toward basic and acidic residues. GTP is bound by residues 192–199 (GVNGTGKT), 278–282 (DTAGR), and 342–345 (TKMD).

The protein belongs to the GTP-binding SRP family. FtsY subfamily. In terms of assembly, part of the signal recognition particle protein translocation system, which is composed of SRP and FtsY.

The protein localises to the cell membrane. It is found in the cytoplasm. The enzyme catalyses GTP + H2O = GDP + phosphate + H(+). Functionally, involved in targeting and insertion of nascent membrane proteins into the cytoplasmic membrane. Acts as a receptor for the complex formed by the signal recognition particle (SRP) and the ribosome-nascent chain (RNC). The protein is Signal recognition particle receptor FtsY of Mycoplasma mycoides subsp. mycoides SC (strain CCUG 32753 / NCTC 10114 / PG1).